The sequence spans 451 residues: tRNA modification GTPase MnmE (451 aa).

3 residues coordinate (6S)-5-formyl-5,6,7,8-tetrahydrofolate: Arg-28, Glu-85, and Lys-124. In terms of domain architecture, TrmE-type G spans 220–377; sequence GMNVVLVGQP…LRSELLRVAG (158 aa). K(+) is bound at residue Asn-230. GTP contacts are provided by residues 230 to 235, 249 to 255, and 274 to 277; these read NVGKSS, TDIAGTT, and DTAG. Ser-234 lines the Mg(2+) pocket. K(+) is bound by residues Thr-249, Ile-251, and Thr-254. Thr-255 provides a ligand contact to Mg(2+). Lys-451 is a binding site for (6S)-5-formyl-5,6,7,8-tetrahydrofolate.

It belongs to the TRAFAC class TrmE-Era-EngA-EngB-Septin-like GTPase superfamily. TrmE GTPase family. In terms of assembly, homodimer. Heterotetramer of two MnmE and two MnmG subunits. Requires K(+) as cofactor.

The protein localises to the cytoplasm. Its function is as follows. Exhibits a very high intrinsic GTPase hydrolysis rate. Involved in the addition of a carboxymethylaminomethyl (cmnm) group at the wobble position (U34) of certain tRNAs, forming tRNA-cmnm(5)s(2)U34. In Aromatoleum aromaticum (strain DSM 19018 / LMG 30748 / EbN1) (Azoarcus sp. (strain EbN1)), this protein is tRNA modification GTPase MnmE.